The following is an 81-amino-acid chain: MKAFFVILGLALLCAYSFALEEQDQLSLRNDLLTVMFAENSELTPETEERYCQKWMWTCDEERKCCEGLVCRLWCKKKIEW.

A signal peptide spans 1 to 19 (MKAFFVILGLALLCAYSFA). Positions 20–50 (LEEQDQLSLRNDLLTVMFAENSELTPETEER) are excised as a propeptide. 3 cysteine pairs are disulfide-bonded: Cys-52/Cys-66, Cys-59/Cys-71, and Cys-65/Cys-75.

This sequence belongs to the neurotoxin 30 (phrixotoxin) family. As to expression, expressed by the venom gland.

Its subcellular location is the secreted. Functionally, inhibits sodium channels Nav1.1/SCN1A (IC(50)=5.7 uM), Nav1.2/SCN2A (IC(50)=12 uM), Nav1.4/SCN4A (IC(50)=4 uM), Nav1.6/SCN8A (IC(50)=6.6 uM), Nav1.7/SCN9A (IC(50)=13.6-1030 nM), potassium channels Kv11.1/KCNH2 (IC(50)=4.7 uM), as well as high-voltage-gated calcium channels Cav1.2/CACNA1C (IC(50)= nM). Also blocks mechanosensitive ion channels (also named stretch-activated channels or SACs) and the hypotonic cell swelling induced calcium increase associated with the activation of such channels. It can thus be useful in treating cardiac ventricular disturbances. Also induces analgesia in mammals. This chain is Kappa-theraphotoxin-Gr2c, found in Grammostola rosea (Chilean rose tarantula).